The following is a 116-amino-acid chain: Large ribosomal subunit protein bL20 (116 aa).

The protein belongs to the bacterial ribosomal protein bL20 family.

Functionally, binds directly to 23S ribosomal RNA and is necessary for the in vitro assembly process of the 50S ribosomal subunit. It is not involved in the protein synthesizing functions of that subunit. This is Large ribosomal subunit protein bL20 from Desulfosudis oleivorans (strain DSM 6200 / JCM 39069 / Hxd3) (Desulfococcus oleovorans).